We begin with the raw amino-acid sequence, 596 residues long: DNA polymerase kappa (596 aa).

Residues 85-320 (CVCIDMDAYF…LPIRKVGGIG (236 aa)) form the UmuC domain. Residues D89 and D180 each contribute to the Mg(2+) site. E181 is an active-site residue. The segment at 516–545 (TRPCPICGTDVENRLDVMNCHVDECILKVQ) adopts a UBZ4-type zinc-finger fold. Residues C519, C522, H536, and C540 each contribute to the Zn(2+) site. The disordered stretch occupies residues 559–584 (NKSTQKPERPSTKKRKLQEKRPKAKK). Residues 570–584 (TKKRKLQEKRPKAKK) show a composition bias toward basic residues.

Belongs to the DNA polymerase type-Y family. Requires Mg(2+) as cofactor. The cofactor is Mn(2+).

It localises to the nucleus. It catalyses the reaction DNA(n) + a 2'-deoxyribonucleoside 5'-triphosphate = DNA(n+1) + diphosphate. In terms of biological role, DNA polymerase specifically involved in DNA repair. Plays an important role in translesion synthesis, where the normal high-fidelity DNA polymerases cannot proceed and DNA synthesis stalls. Depending on the context, it inserts the correct base, but causes frequent base transitions, transversions and frameshifts. Lacks 3'-5' proofreading exonuclease activity. Forms a Schiff base with 5'-deoxyribose phosphate at abasic sites, but does not have lyase activity. The chain is DNA polymerase kappa (polk-1) from Caenorhabditis elegans.